Consider the following 166-residue polypeptide: Large ribosomal subunit protein uL10 (166 aa).

This sequence belongs to the universal ribosomal protein uL10 family. Part of the ribosomal stalk of the 50S ribosomal subunit. The N-terminus interacts with L11 and the large rRNA to form the base of the stalk. The C-terminus forms an elongated spine to which L12 dimers bind in a sequential fashion forming a multimeric L10(L12)X complex.

Its function is as follows. Forms part of the ribosomal stalk, playing a central role in the interaction of the ribosome with GTP-bound translation factors. This is Large ribosomal subunit protein uL10 from Pseudomonas putida (strain GB-1).